Reading from the N-terminus, the 398-residue chain is Succinate--CoA ligase [ADP-forming] subunit beta (398 aa).

Positions 9-254 (KAVLREFGVS…ETEEDAKEIE (246 aa)) constitute an ATP-grasp domain. ATP contacts are provided by residues Lys-46, 53–55 (GRG), Glu-109, Ala-112, and Glu-117. The Mg(2+) site is built by Asn-209 and Asp-223. Residues Asn-274 and 331-333 (GIM) each bind substrate.

This sequence belongs to the succinate/malate CoA ligase beta subunit family. In terms of assembly, heterotetramer of two alpha and two beta subunits. Mg(2+) is required as a cofactor.

It carries out the reaction succinate + ATP + CoA = succinyl-CoA + ADP + phosphate. The catalysed reaction is GTP + succinate + CoA = succinyl-CoA + GDP + phosphate. It functions in the pathway carbohydrate metabolism; tricarboxylic acid cycle; succinate from succinyl-CoA (ligase route): step 1/1. Functionally, succinyl-CoA synthetase functions in the citric acid cycle (TCA), coupling the hydrolysis of succinyl-CoA to the synthesis of either ATP or GTP and thus represents the only step of substrate-level phosphorylation in the TCA. The beta subunit provides nucleotide specificity of the enzyme and binds the substrate succinate, while the binding sites for coenzyme A and phosphate are found in the alpha subunit. The protein is Succinate--CoA ligase [ADP-forming] subunit beta of Afipia carboxidovorans (strain ATCC 49405 / DSM 1227 / KCTC 32145 / OM5) (Oligotropha carboxidovorans).